Consider the following 138-residue polypeptide: MRTLWIVAVLLLGVEGSLVQFETLIMKIAGRSGLLWYSAYGCYCGWGGHGLPQDATDRCCFVHDCCYGKATDCNPKTVSYTYSVKNGEIICEDDDPCKRQVCECDRVAAVCFRDNIPSYNNNYKRFPAENCREEPEPC.

Positions 1–16 (MRTLWIVAVLLLGVEG) are cleaved as a signal peptide. 7 disulfide bridges follow: Cys42–Cys131, Cys44–Cys60, Cys59–Cys111, Cys65–Cys138, Cys66–Cys104, Cys73–Cys97, and Cys91–Cys102. 3 residues coordinate Ca(2+): Tyr43, Gly45, and Gly47. The active site involves His63. Asp64 is a Ca(2+) binding site. Asp105 is an active-site residue.

It belongs to the phospholipase A2 family. Group II subfamily. D49 sub-subfamily. Ca(2+) serves as cofactor. In terms of tissue distribution, expressed by the venom gland.

Its subcellular location is the secreted. The enzyme catalyses a 1,2-diacyl-sn-glycero-3-phosphocholine + H2O = a 1-acyl-sn-glycero-3-phosphocholine + a fatty acid + H(+). Its function is as follows. Snake venom phospholipase A2 (PLA2) that shows very low inhibition of ADP-induced platelet aggregation in platelet-rich plasma of human, rabbit and guinea pig. In vivo, shows efficient edema-inducing activities in rat paws. PLA2 catalyzes the calcium-dependent hydrolysis of the 2-acyl groups in 3-sn-phosphoglycerides. This chain is Acidic phospholipase A2 Cvv-E6h, found in Crotalus viridis viridis (Prairie rattlesnake).